Reading from the N-terminus, the 118-residue chain is Vitelline coat lysin (118 aa).

In Tegula pfeifferi (Pfeiffer's top shell), this protein is Vitelline coat lysin.